We begin with the raw amino-acid sequence, 415 residues long: NEDD8-specific protease 2 (415 aa).

A disordered region spans residues 1-42; sequence MRSNSIFTKEIDSEAVKKSSNLRPPSTGSSNSNGSDTASPKK. The segment covering 26 to 38 has biased composition (low complexity); sequence STGSSNSNGSDTA. S35 bears the Phosphoserine mark. Catalysis depends on residues H171, D188, and C229. The disordered stretch occupies residues 320–415; the sequence is AVTSDSAQPH…QHTQQSIEIH (96 aa). Polar residues-rich tracts occupy residues 335–368, 379–390, and 405–415; these read MPSS…NSSP, TASTSVLPTSIL, and IQHTQQSIEIH. The residue at position 367 (S367) is a Phosphoserine.

It belongs to the peptidase C48 family.

It is found in the cytoplasm. Its subcellular location is the nucleus. In terms of biological role, protease that catalyzes two essential functions in the NEDD8 pathway: processing of full-length NEDD8 to its mature form and deconjugation of NEDD8 from targeted proteins such as the pcu1, pcu2 and pcu4 cullins and other proteins. Has a role in meiosis. This Schizosaccharomyces pombe (strain 972 / ATCC 24843) (Fission yeast) protein is NEDD8-specific protease 2 (nep2).